A 1028-amino-acid polypeptide reads, in one-letter code: Unconventional myosin-Ic-A (1028 aa).

An N-acetylmethionine modification is found at Met1. Positions 12–696 (GVQDFVLLEN…TLFATEDALE (685 aa)) constitute a Myosin motor domain. Position 105 to 112 (105 to 112 (GESGSGKT)) interacts with ATP. Lys348 bears the N6-methyllysine mark. Residues 573–595 (LSKLMEILMSKEPSYVRCIKPND) are actin-binding. IQ domains follow at residues 699-728 (KQGIATFLQARWKGYVQRRNFLHMKHSAIN) and 722-751 (MKHSAINIQSWWRGNIGRKKAAKKRWAVDV). Residues 850–1024 (KDNYPQSVPR…NGHLSVVAPR (175 aa)) enclose the TH1 domain.

Belongs to the TRAFAC class myosin-kinesin ATPase superfamily. Myosin family. In terms of assembly, interacts (via its IQ motifs) with calmodulin.

It localises to the cytoplasm. The protein localises to the cell membrane. The protein resides in the cell projection. Its subcellular location is the stereocilium membrane. Myosins are actin-based motor molecules with ATPase activity. Unconventional myosins serve in intracellular movements. Their highly divergent tails are presumed to bind to membranous compartments, which would be moved relative to actin filaments. Involved in egg activation by coupling dynamic actin to membrane. This is Unconventional myosin-Ic-A (myo1c-a) from Xenopus laevis (African clawed frog).